We begin with the raw amino-acid sequence, 98 residues long: ESAT-6-like protein EsxK (98 aa).

Belongs to the WXG100 family. CFP-10 subfamily. In terms of assembly, strongly interacts with EsxL to form a heterodimeric complex under reducing conditions. The complex is regulated by the redox state of EsxL.

It is found in the secreted. The protein is ESAT-6-like protein EsxK of Mycobacterium tuberculosis (strain ATCC 25618 / H37Rv).